We begin with the raw amino-acid sequence, 316 residues long: HPr kinase/phosphorylase (316 aa).

Active-site residues include His-143 and Lys-164. 158–165 provides a ligand contact to ATP; sequence GEAGSGKS. Residue Ser-165 participates in Mg(2+) binding. Catalysis depends on Asp-182, which acts as the Proton acceptor; for phosphorylation activity. Proton donor; for dephosphorylation activity. The segment at 206-215 is important for the catalytic mechanism of both phosphorylation and dephosphorylation; the sequence is LEVRGLGVLN. Mg(2+) is bound at residue Glu-207. The active site involves Arg-251. The tract at residues 272–277 is important for the catalytic mechanism of dephosphorylation; that stretch reads PVMPGR.

It belongs to the HPrK/P family. As to quaternary structure, homohexamer. Mg(2+) serves as cofactor.

It catalyses the reaction [HPr protein]-L-serine + ATP = [HPr protein]-O-phospho-L-serine + ADP + H(+). The catalysed reaction is [HPr protein]-O-phospho-L-serine + phosphate + H(+) = [HPr protein]-L-serine + diphosphate. Functionally, catalyzes the ATP- as well as the pyrophosphate-dependent phosphorylation of a specific serine residue in HPr, a phosphocarrier protein of the phosphoenolpyruvate-dependent sugar phosphotransferase system (PTS). HprK/P also catalyzes the pyrophosphate-producing, inorganic phosphate-dependent dephosphorylation (phosphorolysis) of seryl-phosphorylated HPr (P-Ser-HPr). The polypeptide is HPr kinase/phosphorylase (Xanthomonas oryzae pv. oryzae (strain MAFF 311018)).